The following is a 650-amino-acid chain: Chaperone protein DnaK (650 aa).

A Phosphothreonine; by autocatalysis modification is found at Thr-200.

The protein belongs to the heat shock protein 70 family.

Functionally, acts as a chaperone. This is Chaperone protein DnaK from Paraburkholderia phytofirmans (strain DSM 17436 / LMG 22146 / PsJN) (Burkholderia phytofirmans).